The primary structure comprises 395 residues: 1-deoxy-D-xylulose 5-phosphate reductoisomerase (395 aa).

Residues threonine 10, glycine 11, serine 12, isoleucine 13, alanine 36, and asparagine 123 each contribute to the NADPH site. Lysine 124 contacts 1-deoxy-D-xylulose 5-phosphate. An NADPH-binding site is contributed by glutamate 125. Aspartate 149 is a binding site for Mn(2+). Residues serine 150, glutamate 151, serine 185, and histidine 208 each contribute to the 1-deoxy-D-xylulose 5-phosphate site. Glutamate 151 lines the Mn(2+) pocket. Residue glycine 214 participates in NADPH binding. The 1-deoxy-D-xylulose 5-phosphate site is built by serine 221, asparagine 226, lysine 227, and glutamate 230. Position 230 (glutamate 230) interacts with Mn(2+).

The protein belongs to the DXR family. Mg(2+) serves as cofactor. It depends on Mn(2+) as a cofactor.

The enzyme catalyses 2-C-methyl-D-erythritol 4-phosphate + NADP(+) = 1-deoxy-D-xylulose 5-phosphate + NADPH + H(+). The protein operates within isoprenoid biosynthesis; isopentenyl diphosphate biosynthesis via DXP pathway; isopentenyl diphosphate from 1-deoxy-D-xylulose 5-phosphate: step 1/6. In terms of biological role, catalyzes the NADPH-dependent rearrangement and reduction of 1-deoxy-D-xylulose-5-phosphate (DXP) to 2-C-methyl-D-erythritol 4-phosphate (MEP). The sequence is that of 1-deoxy-D-xylulose 5-phosphate reductoisomerase from Shewanella amazonensis (strain ATCC BAA-1098 / SB2B).